The following is a 343-amino-acid chain: Heat-inducible transcription repressor HrcA (343 aa).

Belongs to the HrcA family.

Negative regulator of class I heat shock genes (grpE-dnaK-dnaJ and groELS operons). Prevents heat-shock induction of these operons. The chain is Heat-inducible transcription repressor HrcA from Halalkalibacterium halodurans (strain ATCC BAA-125 / DSM 18197 / FERM 7344 / JCM 9153 / C-125) (Bacillus halodurans).